The chain runs to 1654 residues: Microtubule cross-linking factor 2 (1654 aa).

Residues 1-188 are disordered; it reads METPAGESSA…VAASSVGSSR (188 aa). A compositionally biased stretch (low complexity) spans 55-66; the sequence is GSATACGTASSA. Positions 102–113 are enriched in pro residues; sequence GTGPRPPPPPPS. Low complexity predominate over residues 132–147; that stretch reads LGLELALSSDAESAAG. Residues 209–238 form a required for association with Golgi apparatus membrane region; the sequence is PGGLVRELEELRSENDYLKDEIEELRAEML. Coiled coils occupy residues 216–279, 308–349, 448–546, 816–843, and 1079–1113; these read LEEL…AERR, SMRL…LQTE, LKLV…YRSE, IKDL…ERQL, and SQEK…LQKA. The segment at 348–379 is disordered; sequence TELDRPREHSLKKRGTRSLGKTDKKPTAQEDS. Over residues 1122-1145 the composition is skewed to basic and acidic residues; the sequence is SDMEKQDNSWKEARSEKTHDKEGV. The tract at residues 1122 to 1146 is disordered; that stretch reads SDMEKQDNSWKEARSEKTHDKEGVS. 2 positions are modified to phosphoserine: S1165 and S1251. Residues 1406–1505 are KR-rich domain required for microtubules binding; sequence LVSVRSKQIS…HSGSTESVWK (100 aa). 3 disordered regions span residues 1427-1450, 1537-1560, and 1627-1654; these read RPCC…LDST, PTTA…YHQP, and NTIR…AAPQ. Over residues 1628-1638 the composition is skewed to basic residues; it reads TIRHSPSKCRL.

The protein belongs to the MTCL family. As to quaternary structure, interacts with CLASP2. Interacts with CLASP1. The C-terminal SOGA 25 kDa form occurs as a monomer. Post-translationally, proteolytically cleaved into a C-terminal SOGA 25 kDa form that is detected in plasma. Proteolytically cleaved in primary hepatocytes into a C-terminal SOGA 80 kDa form. In terms of processing, phosphorylated during mitosis in a CDK1-dependent manner. In terms of tissue distribution, expressed in liver (at protein level).

It is found in the secreted. The protein resides in the cytoplasm. Its subcellular location is the cytoskeleton. It localises to the golgi apparatus membrane. The protein localises to the midbody. Functionally, microtubule-associated factor that enables integration of the centrosomal and Golgi-associated microtubules on the Golgi membrane, supporting directional migration. Preferentially acts on the perinuclear microtubules accumulated around the Golgi. Associates with the Golgi membrane through the N-terminal coiled-coil region and directly binds microtubules through the C-terminal domain. Required for faithful chromosome segregation during mitosis. Regulates autophagy by playing a role in the reduction of glucose production in an adiponectin- and insulin-dependent manner. This Mus musculus (Mouse) protein is Microtubule cross-linking factor 2 (Mtcl2).